The chain runs to 146 residues: VHLTDAEKAAISGLWGKVBABAAGAZALGRLLVVYPWTZRFFZHFGBLSSASAVMGNAQVKAHGKKVIHAFADGLKHLDBLKGTFASLSZLHCBKLHVBPZBFRLLGBMIVIVLAHHLGKDFTPSAZAAFZKVVAGVASALAHKYH.

An N-acetylvaline modification is found at valine 1. One can recognise a Globin domain in the interval histidine 2–histidine 146. Residue histidine 63 participates in heme b binding. Lysine 82 carries the post-translational modification N6-acetyllysine. Position 92 (histidine 92) interacts with heme b. Cysteine 93 carries the S-nitrosocysteine modification. An N6-acetyllysine modification is found at lysine 144.

The protein belongs to the globin family. Heterotetramer of two alpha chains and two beta chains. In terms of tissue distribution, red blood cells.

In terms of biological role, involved in oxygen transport from the lung to the various peripheral tissues. The chain is Hemoglobin subunit beta (HBB) from Microtus xanthognathus (Yellow-cheeked vole).